The chain runs to 236 residues: LexA repressor (236 aa).

The H-T-H motif DNA-binding region spans 26–46 (FDEMKEALDLRSKSGIHRLIT). Residues S157 and K195 each act as for autocatalytic cleavage activity in the active site.

The protein belongs to the peptidase S24 family. As to quaternary structure, homodimer.

The catalysed reaction is Hydrolysis of Ala-|-Gly bond in repressor LexA.. In terms of biological role, represses a number of genes involved in the response to DNA damage (SOS response), including recA and lexA. In the presence of single-stranded DNA, RecA interacts with LexA causing an autocatalytic cleavage which disrupts the DNA-binding part of LexA, leading to derepression of the SOS regulon and eventually DNA repair. This chain is LexA repressor, found in Azorhizobium caulinodans (strain ATCC 43989 / DSM 5975 / JCM 20966 / LMG 6465 / NBRC 14845 / NCIMB 13405 / ORS 571).